Reading from the N-terminus, the 407-residue chain is Phospholipase A1-II 7 (407 aa).

Residue serine 230 is the Acyl-ester intermediate of the active site. Active-site charge relay system residues include serine 230, aspartate 299, and histidine 336.

Belongs to the AB hydrolase superfamily. Lipase family.

It is found in the cytoplasm. Functionally, acylhydrolase that catalyzes the hydrolysis of phospholipids at the sn-1 position. In Oryza sativa subsp. indica (Rice), this protein is Phospholipase A1-II 7.